The primary structure comprises 259 residues: Dihydroorotate dehydrogenase B (NAD(+)), electron transfer subunit (259 aa).

Residues 2 to 102 (MQKQNMIVVN…LGPLGHGFPV (101 aa)) enclose the FAD-binding FR-type domain. FAD-binding positions include 53–56 (RPIS), 70–72 (LYR), and 77–78 (GT). [2Fe-2S] cluster-binding residues include C221, C226, C229, and C246.

It belongs to the PyrK family. Heterotetramer of 2 PyrK and 2 PyrD type B subunits. The cofactor is [2Fe-2S] cluster. FAD is required as a cofactor.

It functions in the pathway pyrimidine metabolism; UMP biosynthesis via de novo pathway; orotate from (S)-dihydroorotate (NAD(+) route): step 1/1. Its function is as follows. Responsible for channeling the electrons from the oxidation of dihydroorotate from the FMN redox center in the PyrD type B subunit to the ultimate electron acceptor NAD(+). This Bacillus cereus (strain 03BB102) protein is Dihydroorotate dehydrogenase B (NAD(+)), electron transfer subunit.